The chain runs to 239 residues: Fatty acid metabolism regulator protein (239 aa).

In terms of domain architecture, HTH gntR-type spans 6–74; sequence QSPAGFAEEY…HGKPTKINNF (69 aa). A DNA-binding region (H-T-H motif) is located at residues 34 to 53; the sequence is ERELSELIGVTRTTLREVLQ.

Homodimer.

It localises to the cytoplasm. Multifunctional regulator of fatty acid metabolism. This chain is Fatty acid metabolism regulator protein, found in Pectobacterium carotovorum subsp. carotovorum (strain PC1).